The sequence spans 148 residues: Ubiquitin conjugating enzyme E2 B (148 aa).

One can recognise a UBC core domain in the interval 2–148 (AAHKRLQKEI…AKEWTKKYAK (147 aa)). The active-site Glycyl thioester intermediate is Cys87.

It belongs to the ubiquitin-conjugating enzyme family. In terms of assembly, interacts with mkkA (via F-box/WD40 repeat domains).

It carries out the reaction S-ubiquitinyl-[E1 ubiquitin-activating enzyme]-L-cysteine + [E2 ubiquitin-conjugating enzyme]-L-cysteine = [E1 ubiquitin-activating enzyme]-L-cysteine + S-ubiquitinyl-[E2 ubiquitin-conjugating enzyme]-L-cysteine.. Its pathway is protein modification; protein ubiquitination. Involved in protein ubiquitination and degradation during development. Mediates protein ubiquitination at the mound and finger stage required for subsequent development and may be an essential component of the developmental transition between the induction of postaggregative gene expression and subsequent cell-type differentiation and morphogenesis. ubcB and ubpB differentially control ubiquitination/deubiquitination and degradation of mkkA protein in a cell-type-specific and temporally regulated manner. The sequence is that of Ubiquitin conjugating enzyme E2 B (ubcB) from Dictyostelium discoideum (Social amoeba).